The chain runs to 460 residues: Heme sensor protein HssS (460 aa).

The next 2 membrane-spanning stretches (helical) occupy residues Ile-11–Ile-31 and Ile-164–Ser-184. Positions Tyr-186–Asp-238 constitute an HAMP domain. The region spanning Asn-246 to Pro-456 is the Histidine kinase domain. Phosphohistidine; by autocatalysis is present on His-249.

In terms of processing, autophosphorylated.

It is found in the cell membrane. It catalyses the reaction ATP + protein L-histidine = ADP + protein N-phospho-L-histidine.. Member of the two-component regulatory system HssS/HssR involved in intracellular heme homeostasis and tempering of staphylococcal virulence. HssS functions as a heme sensor histidine kinase which is autophosphorylated at a histidine residue and transfers its phosphate group to an aspartate residue of HssR. HssR/HssS activates the expression of hrtAB, an efflux pump, in response to extracellular heme, hemin, hemoglobin or blood. This Staphylococcus saprophyticus subsp. saprophyticus (strain ATCC 15305 / DSM 20229 / NCIMB 8711 / NCTC 7292 / S-41) protein is Heme sensor protein HssS (hssS).